Consider the following 523-residue polypeptide: NAD(P) transhydrogenase subunit alpha (523 aa).

Over 1–411 the chain is Cytoplasmic; that stretch reads MKIGAPREIF…AEIATFRKQT (411 aa). Residues 127 to 130, Val177, 197 to 199, and Gly229 each bind NAD(+); these read QKMD and DVR. The next 2 helical transmembrane spans lie at 412–432 and 433–455; these read VSQV…GMYA and PPSF…QVIW. Topologically, residues 456 to 464 are cytoplasmic; sequence NVSHSLHTP. Residues 465 to 485 form a helical membrane-spanning segment; sequence LMAVTNAISGIVILGALLQIG. Over 486–489 the chain is Periplasmic; it reads SGNV. A helical membrane pass occupies residues 490–510; it reads LVVLLAAISVLIATINIVGGF. Topologically, residues 511–523 are cytoplasmic; sequence LVTRRMLAMFQKS.

The protein belongs to the AlaDH/PNT family. As to quaternary structure, heterodimer of an alpha (PntA) and a beta (PntB) chain.

The protein resides in the cell inner membrane. The catalysed reaction is NAD(+) + NADPH + H(+)(in) = NADH + NADP(+) + H(+)(out). Functionally, the transhydrogenation between NADH and NADP is coupled to respiration and ATP hydrolysis and functions as a proton pump across the membrane. In Cereibacter sphaeroides (Rhodobacter sphaeroides), this protein is NAD(P) transhydrogenase subunit alpha.